The primary structure comprises 216 residues: Elongation factor Ts (216 aa).

Residues 81 to 84 are involved in Mg(2+) ion dislocation from EF-Tu; that stretch reads TDFV.

It belongs to the EF-Ts family.

Its subcellular location is the cytoplasm. Functionally, associates with the EF-Tu.GDP complex and induces the exchange of GDP to GTP. It remains bound to the aminoacyl-tRNA.EF-Tu.GTP complex up to the GTP hydrolysis stage on the ribosome. In Geotalea uraniireducens (strain Rf4) (Geobacter uraniireducens), this protein is Elongation factor Ts.